The sequence spans 118 residues: Late cornified envelope protein 1E (118 aa).

Over residues 1–10 the composition is skewed to low complexity; that stretch reads MSCQQSQQQC. 2 disordered regions span residues 1-23 and 84-118; these read MSCQQSQQQCQPPPKCTPKCPPK and RSHRHRPQSSDCCSQPSGGSSCCGGGSGQHSGGCC. Positions 11-23 are enriched in pro residues; it reads QPPPKCTPKCPPK. Residues 92 to 103 are compositionally biased toward low complexity; the sequence is SSDCCSQPSGGS. The segment covering 104-118 has biased composition (gly residues); the sequence is SCCGGGSGQHSGGCC.

This sequence belongs to the LCE family. In terms of assembly, interacts with CYSRT1. Skin-specific. Expression was readily detected in adult trunk skin, adult arm skin, fetal skin, penal skin, vulva, esophagus and tongue. Not expressed in the cervix, rectum, lung, colon, or placenta.

In terms of biological role, precursors of the cornified envelope of the stratum corneum. The polypeptide is Late cornified envelope protein 1E (LCE1E) (Homo sapiens (Human)).